A 538-amino-acid polypeptide reads, in one-letter code: Reticuline oxidase (538 aa).

Positions 1–23 (MENKTPIFFSLSIFLSLLNCALG) are cleaved as a signal peptide. C30 and C89 are oxidised to a cystine. N-linked (GlcNAc...) asparagine glycosylation is present at N38. Residues 67-241 (LISKPSAIIL…YAWKIKLLPV (175 aa)) form the FAD-binding PCMH-type domain. Positions 104 to 166 (HSYEGLSYTS…SKLGFTAGWC (63 aa)) form a cross-link, 6-(S-cysteinyl)-8alpha-(pros-histidyl)-FAD (His-Cys). 2 N-linked (GlcNAc...) asparagine glycosylation sites follow: N423 and N471.

Belongs to the oxygen-dependent FAD-linked oxidoreductase family. It depends on FAD as a cofactor. Requires a metal cation as cofactor. In terms of processing, the FAD cofactor is bound via a bicovalent 6-S-cysteinyl, 8alpha-N1-histidyl FAD linkage.

The protein resides in the cytoplasmic vesicle. The catalysed reaction is (S)-reticuline + O2 = (S)-scoulerine + H2O2 + H(+). Its pathway is alkaloid biosynthesis; (S)-scoulerine biosynthesis; (S)-scoulerine from (S)-reticuline: step 1/1. In terms of biological role, essential to the formation of benzophenanthridine alkaloids in the response of plants to pathogenic attack. Catalyzes the stereospecific conversion of the N-methyl moiety of (S)-reticuline into the berberine bridge carbon of (S)-scoulerine. The sequence is that of Reticuline oxidase (BBE1) from Eschscholzia californica (California poppy).